The sequence spans 124 residues: Histone H2A (124 aa).

Over residues 1 to 18 (MSGRGKGGKVKGKAKSRS) the composition is skewed to basic residues. The segment at 1–21 (MSGRGKGGKVKGKAKSRSNRA) is disordered. The residue at position 2 (serine 2) is an N-acetylserine. Position 2 is a phosphoserine (serine 2). At lysine 36 the chain carries N6-succinyllysine. The residue at position 104 (glutamine 104) is an N5-methylglutamine. A Glycyl lysine isopeptide (Lys-Gly) (interchain with G-Cter in ubiquitin) cross-link involves residue lysine 119. The residue at position 120 (threonine 120) is a Phosphothreonine.

It belongs to the histone H2A family. In terms of assembly, the nucleosome is a histone octamer containing two molecules each of H2A, H2B, H3 and H4 assembled in one H3-H4 heterotetramer and two H2A-H2B heterodimers. The octamer wraps approximately 147 bp of DNA. In terms of processing, the chromatin-associated form, but not the free cytoplasmic form, is phosphorylated on Thr-120 by NHK-1 during mitosis, and dephosphorylated during S-phase. Also phosphorylated on Thr-120 by NHK-1 during prophase I of meiosis; which is required for acetylation of H3 'Lys-14' and H4 'Lys-5', diassembly of the synaptonemal complex, and karyosome formation. Post-translationally, monoubiquitination of Lys-119 by sce/dRING gives a specific tag for epigenetic transcriptional repression. Phosphorylation on Ser-2 is enhanced during mitosis. Phosphorylation on Ser-2 directly represses transcription.

It is found in the nucleus. The protein resides in the chromosome. In terms of biological role, core component of nucleosome. Nucleosomes wrap and compact DNA into chromatin, limiting DNA accessibility to the cellular machineries which require DNA as a template. Histones thereby play a central role in transcription regulation, DNA repair, DNA replication and chromosomal stability. DNA accessibility is regulated via a complex set of post-translational modifications of histones, also called histone code, and nucleosome remodeling. The sequence is that of Histone H2A (His2A) from Drosophila erecta (Fruit fly).